The chain runs to 116 residues: Peptidyl-tRNA hydrolase (116 aa).

This sequence belongs to the PTH2 family.

The protein resides in the cytoplasm. The catalysed reaction is an N-acyl-L-alpha-aminoacyl-tRNA + H2O = an N-acyl-L-amino acid + a tRNA + H(+). Functionally, the natural substrate for this enzyme may be peptidyl-tRNAs which drop off the ribosome during protein synthesis. This chain is Peptidyl-tRNA hydrolase, found in Methanococcus maripaludis (strain C6 / ATCC BAA-1332).